The sequence spans 1009 residues: C2 domain-containing protein aex-1 (1009 aa).

Positions 812 to 945 constitute a C2 domain; it reads NAPHVDVHIS…ASEEKPTQRL (134 aa).

The protein belongs to the unc-13 family. Expressed in intestine, body wall muscles and some amphid neurons.

In terms of biological role, involved in retrograde signaling from post-synaptic cells to pre-synaptic neurons, probably by regulating vesicle exocytosis in post-synaptic cells. Acts in muscles, to regulate the localization of synaptic vesicle fusion protein unc-13 likely during vesicle exocytosis and thus regulate retrograde signaling at the neuromuscular junction (NMJ). Regulates anterior body muscle contractions (aBOC) and the expulsion steps during the defecation motor program (DMP). Probably by regulating DMP, plays a homeostatic role in the uptake of triglycerides. Regulates locomotion. This chain is C2 domain-containing protein aex-1, found in Caenorhabditis elegans.